We begin with the raw amino-acid sequence, 255 residues long: MYRTLGSIALLAGGAAAHGAVTSYNIAGKDYPGYSGFAPTGQDVIQWQWPDYNPVLSASDPKLRCNGGTGAALYAEAAPGDTITATWAQWTHSQGPILVWMYKCPGDFSSCDGSGAGWFKIDEAGFHGDGTTVFLDTETPSGWDIAKLVGGNKSWSSKIPDGLAPGNYLVRHELIALHQANNPQFYPECAQIKVTGSGTAEPAASYKAAIPGYCQQSDPNISFNINDHSLPQEYKIPGPPVFKGTASAKARAFQA.

An N-terminal signal peptide occupies residues 1-19 (MYRTLGSIALLAGGAAAHG). Residues His18 and His92 each coordinate Cu(2+). Disulfide bonds link Cys65–Cys189 and Cys104–Cys111. A glycan (N-linked (GlcNAc...) asparagine) is linked at Asn152. O2-binding residues include His178 and Gln184. Position 186 (Tyr186) interacts with Cu(2+). The N-linked (GlcNAc...) asparagine glycan is linked to Asn220.

This sequence belongs to the polysaccharide monooxygenase AA9 family. Requires Cu(2+) as cofactor.

Its subcellular location is the secreted. The catalysed reaction is [(1-&gt;4)-beta-D-glucosyl]n+m + reduced acceptor + O2 = 4-dehydro-beta-D-glucosyl-[(1-&gt;4)-beta-D-glucosyl]n-1 + [(1-&gt;4)-beta-D-glucosyl]m + acceptor + H2O.. Functionally, lytic polysaccharide monooxygenase (LPMO) that depolymerizes crystalline and amorphous polysaccharides via the oxidation of scissile alpha- or beta-(1-4)-glycosidic bonds, yielding specifically C1 oxidation product. Catalysis by LPMOs requires the reduction of the active-site copper from Cu(II) to Cu(I) by a reducing agent and H(2)O(2) or O(2) as a cosubstrate. Is active on regenerated amorphous cellulose (RAC) in the presence of ascorbic acid or 3-methylcatechol. Also acts on phosphoric acid swollen cellulose (PASC) as a substrate. This chain is AA9 family lytic polysaccharide monooxygenase D, found in Thermothelomyces thermophilus (strain ATCC 42464 / BCRC 31852 / DSM 1799) (Sporotrichum thermophile).